A 20-amino-acid polypeptide reads, in one-letter code: ATP synthase subunit beta, chloroplastic (20 aa).

Residues 1 to 10 (METTNESLGY) show a composition bias toward polar residues. The disordered stretch occupies residues 1-20 (METTNESLGYTDQIIGPVLD).

Belongs to the ATPase alpha/beta chains family. F-type ATPases have 2 components, CF(1) - the catalytic core - and CF(0) - the membrane proton channel. CF(1) has five subunits: alpha(3), beta(3), gamma(1), delta(1), epsilon(1). CF(0) has four main subunits: a(1), b(1), b'(1) and c(9-12).

The protein resides in the plastid. Its subcellular location is the chloroplast thylakoid membrane. It catalyses the reaction ATP + H2O + 4 H(+)(in) = ADP + phosphate + 5 H(+)(out). Produces ATP from ADP in the presence of a proton gradient across the membrane. The catalytic sites are hosted primarily by the beta subunits. The protein is ATP synthase subunit beta, chloroplastic of Chattonella marina var. antiqua (Red tide flagellate).